Here is a 68-residue protein sequence, read N- to C-terminus: DNA-directed RNA polymerase subunit omega (68 aa).

Belongs to the RNA polymerase subunit omega family. As to quaternary structure, the RNAP catalytic core consists of 2 alpha, 1 beta, 1 beta' and 1 omega subunit. When a sigma factor is associated with the core the holoenzyme is formed, which can initiate transcription.

It catalyses the reaction RNA(n) + a ribonucleoside 5'-triphosphate = RNA(n+1) + diphosphate. Functionally, promotes RNA polymerase assembly. Latches the N- and C-terminal regions of the beta' subunit thereby facilitating its interaction with the beta and alpha subunits. The protein is DNA-directed RNA polymerase subunit omega of Ruminiclostridium cellulolyticum (strain ATCC 35319 / DSM 5812 / JCM 6584 / H10) (Clostridium cellulolyticum).